A 148-amino-acid polypeptide reads, in one-letter code: F420H(2)-dependent quinone reductase MT1609 (148 aa).

Residues 46 to 48 (AKT), 52 to 57 (RKTPLM), 68 to 71 (VASL), 79 to 83 (VWYHN), and tyrosine 125 each bind coenzyme F420-(gamma-Glu)n.

Belongs to the F420H(2)-dependent quinone reductase family.

It is found in the cell membrane. The catalysed reaction is oxidized coenzyme F420-(gamma-L-Glu)(n) + a quinol + H(+) = reduced coenzyme F420-(gamma-L-Glu)(n) + a quinone. Involved in a F420-dependent anti-oxidant mechanism that protects M.tuberculosis against oxidative stress and bactericidal agents. Catalyzes the F420H(2)-dependent two-electron reduction of quinones to dihydroquinones, thereby preventing the formation of cytotoxic semiquinones obtained by the one-electron reduction pathway. In vitro, catalyzes the reduction of menadione to menadiol; since menaquinone is the sole quinone electron carrier in the respiratory chain in M.tuberculosis, the physiological electron acceptor for Fqr-mediated F420H(2) oxidation is therefore likely to be the endogenous menaquinone found in the membrane fraction of M.tuberculosis. In Mycobacterium tuberculosis (strain CDC 1551 / Oshkosh), this protein is F420H(2)-dependent quinone reductase MT1609.